Reading from the N-terminus, the 460-residue chain is Muscarinic acetylcholine receptor M1 (460 aa).

Over 1–22 the chain is Extracellular; the sequence is MNTSAPPAVSPNITVLAPGKGP. 2 N-linked (GlcNAc...) asparagine glycosylation sites follow: N2 and N12. Residues 23–48 form a helical membrane-spanning segment; sequence WQVAFIGITTGLLSLATVTGNLLVLI. Residues 49-62 lie on the Cytoplasmic side of the membrane; that stretch reads SFKVNTELKTVNNY. The helical transmembrane segment at 63–84 threads the bilayer; it reads FLLSLACADLIIGTFSMNLYTT. The Extracellular segment spans residues 85-95; the sequence is YLLMGHWALGT. A helical membrane pass occupies residues 96–121; that stretch reads LACDLWLALDYVASNASVMNLLLISF. A disulfide bridge connects residues C98 and C178. Topologically, residues 122 to 142 are cytoplasmic; the sequence is DRYFSVTRPLSYRAKRTPRRA. A helical membrane pass occupies residues 143 to 164; the sequence is ALMIGLAWLVSFVLWAPAILFW. Residues 165-185 lie on the Extracellular side of the membrane; that stretch reads QYLVGERTVLAGQCYIQFLSQ. Residues 186 to 209 form a helical membrane-spanning segment; the sequence is PIITFGTAMAAFYLPVTVMCTLYW. The Cytoplasmic segment spans residues 210–366; that stretch reads RIYRETENRA…LVKEKKAART (157 aa). Disordered stretches follow at residues 225-256, 274-297, and 310-351; these read LQGS…ETPP, WKEE…EEPG, and EAQA…QLAK. T230 is modified (phosphothreonine). Residues 238 to 247 are compositionally biased toward low complexity; that stretch reads SSSSERSQPG. Over residues 328 to 343 the composition is skewed to basic residues; the sequence is RPTKKGRDRAGKGQKP. The chain crosses the membrane as a helical span at residues 367 to 390; the sequence is LSAILLAFILTWTPYNIMVLVSTF. Residues 391 to 397 lie on the Extracellular side of the membrane; sequence CKDCVPE. Residues 398–420 form a helical membrane-spanning segment; that stretch reads TLWELGYWLCYVNSTINPMCYAL. Topologically, residues 421-460 are cytoplasmic; sequence CNKAFRDTFRLLLLCRWDKRRWRKIPKRPGSVHRTPSRQC. At T428 the chain carries Phosphothreonine. The residue at position 451 (S451) is a Phosphoserine. T455 is modified (phosphothreonine). Residue S457 is modified to Phosphoserine.

The protein belongs to the G-protein coupled receptor 1 family. Muscarinic acetylcholine receptor subfamily. CHRM1 sub-subfamily. As to quaternary structure, interacts with GPRASP2. Interacts with TMEM147.

Its subcellular location is the cell membrane. It is found in the postsynaptic cell membrane. The muscarinic acetylcholine receptor mediates various cellular responses, including inhibition of adenylate cyclase, breakdown of phosphoinositides and modulation of potassium channels through the action of G proteins. Primary transducing effect is Pi turnover. The protein is Muscarinic acetylcholine receptor M1 (CHRM1) of Homo sapiens (Human).